The following is a 635-amino-acid chain: MINISFPDGSVRQFENDITAYEVANAISMSLAKAAMVAEINGELKDLSTVIENDCKLRILTAKDSECLEIIRHDAAHIIAEAAKELFPDIQVTIGPAIENGFFYDFAKDKPFTPDDVAMIEARMHEIVKRNEQITRELWNRDKAIEFFKSIGEHYKAEIIASIPAGEQITLYRQGNFIDLCRGPHAPSTGFVKHFKLMKVAGAYWRGDSRNEMLQRIYGTAWATKEQLDNYLLMLEEAEKRDHRKLGKELDLFHFQEEAQGMVFWHDKGWSIYNTIEQYIRKKIRKNGYTEVKTPVLVDKSLWEASGHWEKFRDDMFALDTDDKTLALKPMNCPCHVQIFKQGIKSYRDLPLRMSEFGLCHRNEASGALHGLMRVRSLVQDDAHIFCTEEQITDETVSFCKLLTEVYKDFGFTNISVKFSDRPEVRAGSNGTWDKAENALKEAVEKAGFTYTLNPGEGAFYGPKLEFVLTDAIGRQWQCGTLQMDFVLPERLDASYIAASGEKKRPVMLHRAILGSLERFIGILIEEYAGCFPLWLAPIQVAIATITSDLNDYALEVQKALIDNGVRTDINISPDKINYKIREFYNQKIPMIAVIGKQEQENKQVTIRRLRTTEQEVLSLEQLITLIKEENEKYL.

The TGS domain maps to 1 to 61 (MINISFPDGS…ENDCKLRILT (61 aa)). The segment at 242–533 (DHRKLGKELD…LIEEYAGCFP (292 aa)) is catalytic. 3 residues coordinate Zn(2+): C333, H384, and H510.

This sequence belongs to the class-II aminoacyl-tRNA synthetase family. As to quaternary structure, homodimer. Requires Zn(2+) as cofactor.

Its subcellular location is the cytoplasm. The catalysed reaction is tRNA(Thr) + L-threonine + ATP = L-threonyl-tRNA(Thr) + AMP + diphosphate + H(+). Its function is as follows. Catalyzes the attachment of threonine to tRNA(Thr) in a two-step reaction: L-threonine is first activated by ATP to form Thr-AMP and then transferred to the acceptor end of tRNA(Thr). Also edits incorrectly charged L-seryl-tRNA(Thr). The protein is Threonine--tRNA ligase of Rickettsia akari (strain Hartford).